Here is a 785-residue protein sequence, read N- to C-terminus: Ribosome biogenesis protein BOP1 homolog (785 aa).

A compositionally biased stretch (basic residues) spans Met1–Val11. Residues Met1–Ile160 are disordered. Acidic residues-rich tracts occupy residues Glu45–Asp54, Ser61–Gly73, and Ser85–Ala102. The span at Asp103–Asp112 shows a compositional bias: basic and acidic residues. Residues Ala150–Asp159 show a composition bias toward acidic residues. WD repeat units lie at residues Gly446–Glu487, Glu489–Val527, Thr571–Pro613, Lys616–Lys654, Thr657–Gln696, Leu700–Gln739, and Arg755–Thr785.

Belongs to the WD repeat BOP1/ERB1 family.

It localises to the nucleus. The protein resides in the nucleolus. Its subcellular location is the nucleoplasm. In terms of biological role, required for maturation of ribosomal RNAs and formation of the large ribosomal subunit. The chain is Ribosome biogenesis protein BOP1 homolog from Drosophila persimilis (Fruit fly).